A 218-amino-acid polypeptide reads, in one-letter code: Ras-related protein Rab11D (218 aa).

A GTP-binding site is contributed by 20–27; sequence GDSGVGKS. Positions 42–50 match the Effector region motif; sequence SKSTIGVEF. GTP-binding positions include 68–72 and 126–129; these read DTAGQ and NKSD. 2 S-geranylgeranyl cysteine lipidation sites follow: cysteine 215 and cysteine 216.

It belongs to the small GTPase superfamily. Rab family.

Its subcellular location is the cell membrane. In Lotus japonicus (Lotus corniculatus var. japonicus), this protein is Ras-related protein Rab11D (RAB11D).